The following is a 69-amino-acid chain: Metallothionein-like protein CRS5 (69 aa).

It belongs to the metallothionein superfamily. Type 13 family.

Critical role in copper (specific) homeostasis and detoxification. May protect by directly chelating and sequestering copper ions. This is Metallothionein-like protein CRS5 (CRS5) from Saccharomyces cerevisiae (strain RM11-1a) (Baker's yeast).